The chain runs to 156 residues: 3-hydroxyacyl-[acyl-carrier-protein] dehydratase FabZ (156 aa).

Residue histidine 54 is part of the active site.

The protein belongs to the thioester dehydratase family. FabZ subfamily.

Its subcellular location is the cytoplasm. The enzyme catalyses a (3R)-hydroxyacyl-[ACP] = a (2E)-enoyl-[ACP] + H2O. Involved in unsaturated fatty acids biosynthesis. Catalyzes the dehydration of short chain beta-hydroxyacyl-ACPs and long chain saturated and unsaturated beta-hydroxyacyl-ACPs. The protein is 3-hydroxyacyl-[acyl-carrier-protein] dehydratase FabZ of Koribacter versatilis (strain Ellin345).